The chain runs to 322 residues: Gluconeogenesis factor (322 aa).

NAD(+)-binding positions include Thr13, 217 to 219 (NVM), 263 to 267 (KYAKE), and 300 to 301 (RH).

This sequence belongs to the gluconeogenesis factor family.

The protein localises to the cytoplasm. Required for morphogenesis under gluconeogenic growth conditions. The chain is Gluconeogenesis factor from Halalkalibacterium halodurans (strain ATCC BAA-125 / DSM 18197 / FERM 7344 / JCM 9153 / C-125) (Bacillus halodurans).